The sequence spans 805 residues: MEPVMSLALAAHGPPSILEPLFKTVTTSTTTTTTTTTSTTTTTASPAGYSPGYPGTTLLTALFENLTSTAASGLYDPYSGMYGNQTNGTIGFETKGPRYSLASMVVMGFVAAILSTVTVAGNVMVMISFKIDKQLQTISNYFLFSLAIADFAIGAISMPLFAVTTILGYWPLGPIVCDTWLALDYLASNASVLNLLIISFDRYFSVTRPLTYRAKRTTNRAAVMIGAAWGISLLLWPPWIYSWPYIEGKRTVPKDECYIQFIETNQYITFGTALAAFYFPVTIMCFLYWRIWRETKKRQKDLPNLQAGKKDSSKRSNSSDENTVVNHASGGLLAFAQVGGNDHDTWRRPRSESSPDAESVYMTNMVIDSGYHGMHSRKSSIKSTNTIKKSYTCFGSIKEWCIAWWHSGREDSDDFAYEQEEPSDLGYATPVTIETPLQSSVSRCTSMNVMRDNYSMGGSVSGVRPPSILLSDVSPTPLPRPPLASISQLQEMSAVTASTTANVNTSGNGNGAINNNNNASHNGNGAVNGNGAGNGSGIGLGTTGNATHRDSRTLPVINRINSRSVSQDSVYTILIRLPSDGASSNAANGGGGGPGAGAAASASLSMQGDCAPSIKMIHEDGPTTTAAAAPLASAAATRRPLPSRDSEFSLPLGRRMSHAQHDARLLNAKVIPKQLGKAGGGAAGGGVGGAHALMNARNAAKKKKKSQEKRQESKAAKTLSAILLSFIITWTPYNILVLIKPLTTCSDCIPTELWDFFYALCYINSTINPMCYALCNATFRRTYVRILTCKWHTRNREGMVRGVYN.

Over 1–100 (MEPVMSLALA…GFETKGPRYS (100 aa)) the chain is Extracellular. Residues 27–43 (TSTTTTTTTTTSTTTTT) are compositionally biased toward low complexity. Residues 27–47 (TSTTTTTTTTTSTTTTTASPA) are disordered. N-linked (GlcNAc...) asparagine glycosylation is found at Asn65, Asn84, and Asn87. A helical membrane pass occupies residues 101 to 121 (LASMVVMGFVAAILSTVTVAG). Residues 122 to 141 (NVMVMISFKIDKQLQTISNY) are Cytoplasmic-facing. A helical membrane pass occupies residues 142–162 (FLFSLAIADFAIGAISMPLFA). The Extracellular segment spans residues 163–177 (VTTILGYWPLGPIVC). Residues 178–198 (DTWLALDYLASNASVLNLLII) form a helical membrane-spanning segment. The Cytoplasmic portion of the chain corresponds to 199–220 (SFDRYFSVTRPLTYRAKRTTNR). A helical transmembrane segment spans residues 221-241 (AAVMIGAAWGISLLLWPPWIY). The Extracellular segment spans residues 242 to 266 (SWPYIEGKRTVPKDECYIQFIETNQ). A helical transmembrane segment spans residues 267–287 (YITFGTALAAFYFPVTIMCFL). At 288–718 (YWRIWRETKK…KRQESKAAKT (431 aa)) the chain is on the cytoplasmic side. 3 disordered regions span residues 302-322 (LPNL…SDEN), 340-359 (GNDH…DAES), and 507-530 (GNGN…VNGN). Composition is skewed to basic and acidic residues over residues 308 to 318 (GKKDSSKRSNS) and 341 to 353 (NDHD…RSES). Positions 507 to 525 (GNGNGAINNNNNASHNGNG) are enriched in low complexity. The chain crosses the membrane as a helical span at residues 719 to 739 (LSAILLSFIITWTPYNILVLI). At 740–752 (KPLTTCSDCIPTE) the chain is on the extracellular side. A helical transmembrane segment spans residues 753–773 (LWDFFYALCYINSTINPMCYA). Residues 774–805 (LCNATFRRTYVRILTCKWHTRNREGMVRGVYN) are Cytoplasmic-facing.

It belongs to the G-protein coupled receptor 1 family. Muscarinic acetylcholine receptor subfamily. As to expression, intense staining in the glomeruli of the antennal lobes, the region of the nervous system containing terminals of antennal olfactory sensory neurons and mechanosensory neurons. Also a discrete group of neurosecretory cells in the pars intercerebralis of the brain.

Its subcellular location is the cell membrane. It is found in the postsynaptic cell membrane. Functionally, the muscarinic acetylcholine receptor mediates various cellular responses, including inhibition of adenylate cyclase, breakdown of phosphoinositides and modulation of potassium channels through the action of G proteins. Primary transducing effect is Pi turnover. May have a role in the processing of olfactory and mechanosensory signals; regulation of neurosecretion. The polypeptide is Muscarinic acetylcholine receptor DM1 (mAChR-A) (Drosophila melanogaster (Fruit fly)).